The primary structure comprises 150 residues: Catabolic 3-dehydroquinase (150 aa).

Catalysis depends on Y24, which acts as the Proton acceptor. Substrate contacts are provided by N75, H81, and D88. The Proton donor role is filled by H101. Substrate is bound by residues 102-103 (IS) and R112.

This sequence belongs to the type-II 3-dehydroquinase family. In terms of assembly, homododecamer. Adopts a ring-like structure, composed of an arrangement of two hexameric rings stacked on top of one another.

The catalysed reaction is 3-dehydroquinate = 3-dehydroshikimate + H2O. The protein operates within aromatic compound metabolism; 3,4-dihydroxybenzoate biosynthesis; 3,4-dihydroxybenzoate from 3-dehydroquinate: step 1/2. In terms of biological role, is involved in the catabolism of quinate. Allows the utilization of quinate as carbon source via the beta-ketoadipate pathway. This is Catabolic 3-dehydroquinase from Verticillium alfalfae (strain VaMs.102 / ATCC MYA-4576 / FGSC 10136) (Verticillium wilt of alfalfa).